We begin with the raw amino-acid sequence, 784 residues long: LPS-assembly protein LptD (784 aa).

The signal sequence occupies residues 1–24; the sequence is MKKRIPTLLATMIATALYSQQGLA. 2 disulfides stabilise this stretch: C31/C724 and C173/C725.

The protein belongs to the LptD family. As to quaternary structure, component of the lipopolysaccharide transport and assembly complex. Interacts with LptE and LptA. In terms of processing, contains two intramolecular disulfide bonds.

The protein resides in the cell outer membrane. Its function is as follows. Together with LptE, is involved in the assembly of lipopolysaccharide (LPS) at the surface of the outer membrane. This Escherichia coli O6:K15:H31 (strain 536 / UPEC) protein is LPS-assembly protein LptD.